Consider the following 100-residue polypeptide: Co-chaperonin GroES (100 aa).

It belongs to the GroES chaperonin family. Heptamer of 7 subunits arranged in a ring. Interacts with the chaperonin GroEL.

The protein localises to the cytoplasm. Its function is as follows. Together with the chaperonin GroEL, plays an essential role in assisting protein folding. The GroEL-GroES system forms a nano-cage that allows encapsulation of the non-native substrate proteins and provides a physical environment optimized to promote and accelerate protein folding. GroES binds to the apical surface of the GroEL ring, thereby capping the opening of the GroEL channel. This is Co-chaperonin GroES from Nocardia farcinica (strain IFM 10152).